Consider the following 334-residue polypeptide: MGGVTLEKIRIGIVGYGNLGKGAELGIRQNKDMELVGIFTRRNPNSIKPLTEGVKVYSVDSARDMADKIDVMLLCSGSRTDLPVQGPEFAAMFNIVDGFDTHNKIQEYFESVDAKAKESKKVAVIACGWDPGMFSLNRLFGEVILPEGKTYTFWGKGVSQGHSDAIRRVKGVVDAKQYTIPVESAIELVRKGENPELTTRQKHIRECFVVVEEGADKERIEREIKTMPDYFADYDTIVHFISLEELKEKHSGIPHGGFSIRTGRTGINNENKHTIEYSLKLDSNPDFTANTLLAYARAAYRLNKEGVFGAKTVFDIPPAYLSPKSAEELRRSLL.

Residues 16 to 19 (YGNL), 40 to 42 (TRR), 75 to 78 (CSGS), 98 to 100 (GFD), and 127 to 131 (CGWDP) each bind NADP(+). Residues aspartate 100, aspartate 130, tryptophan 154, 160-161 (QG), threonine 179, arginine 205, histidine 255, and asparagine 284 contribute to the substrate site.

The protein belongs to the diaminopimelate dehydrogenase family. As to quaternary structure, homodimer.

It catalyses the reaction meso-2,6-diaminopimelate + NADP(+) + H2O = (S)-2-amino-6-oxoheptanedioate + NH4(+) + NADPH + H(+). It participates in amino-acid biosynthesis; L-lysine biosynthesis via DAP pathway; DL-2,6-diaminopimelate from (S)-tetrahydrodipicolinate: step 1/1. Catalyzes the reversible NADPH-dependent reductive amination of L-2-amino-6-oxopimelate, the acyclic form of L-tetrahydrodipicolinate, to generate the meso compound, D,L-2,6-diaminopimelate. Probably plays a role in lysine biosynthesis. Exhibits a high substrate specificity for meso-2,6-diaminopimelate (m-DAP), since the activity with L,L-2,6-diaminopimelate is less than 5% of the activity observed with m-DAP. Can use NAD(+) only very poorly since the activity observed in the presence of NAD(+) is about 0.3% of that with NADP(+). The protein is Meso-diaminopimelate D-dehydrogenase (ddh) of Acetivibrio thermocellus (strain ATCC 27405 / DSM 1237 / JCM 9322 / NBRC 103400 / NCIMB 10682 / NRRL B-4536 / VPI 7372) (Clostridium thermocellum).